The following is a 311-amino-acid chain: Putative F-box protein At3g28280 (311 aa).

Residues 1-43 (MNSLPEDLLAMILVKLPIKIFTTFKIVCTQWESMVDSPYFRDL) form the F-box domain.

The sequence is that of Putative F-box protein At3g28280 from Arabidopsis thaliana (Mouse-ear cress).